We begin with the raw amino-acid sequence, 238 residues long: MVKPKTKISKQKFLSQITKKPRKCDIKKERKLENQRIRKYQQFLDILNLMWSIVDSVSLEDHINLAETMKDDYILLLLRRPSKKNILDDVLSNIDLTILKETTLNLLSTSTWKYISLYALMDEKFIFKWSHKIDFFRLKMNEKGCVYGGGAFDPRFTLQRRVFSKKFHKLFPGFQMYEPCERCYIDTQWLSKNIYIKDEQKWFCEDCFDEVCHYCLFEDCDGNCDDFGFDDYWSYDWP.

This is an uncharacterized protein from Acheta domesticus (House cricket).